Reading from the N-terminus, the 205-residue chain is Adenylyl-sulfate kinase (205 aa).

31–38 serves as a coordination point for ATP; it reads GLSGAGKS. S105 serves as the catalytic Phosphoserine intermediate.

It belongs to the APS kinase family.

The enzyme catalyses adenosine 5'-phosphosulfate + ATP = 3'-phosphoadenylyl sulfate + ADP + H(+). It functions in the pathway sulfur metabolism; hydrogen sulfide biosynthesis; sulfite from sulfate: step 2/3. Functionally, catalyzes the synthesis of activated sulfate. The chain is Adenylyl-sulfate kinase from Shewanella sp. (strain MR-4).